Consider the following 405-residue polypeptide: Phosphopentomutase (405 aa).

The Mn(2+) site is built by Asp-10, Asp-303, His-308, Asp-344, His-345, and His-356.

The protein belongs to the phosphopentomutase family. The cofactor is Mn(2+).

The protein localises to the cytoplasm. The enzyme catalyses 2-deoxy-alpha-D-ribose 1-phosphate = 2-deoxy-D-ribose 5-phosphate. It catalyses the reaction alpha-D-ribose 1-phosphate = D-ribose 5-phosphate. The protein operates within carbohydrate degradation; 2-deoxy-D-ribose 1-phosphate degradation; D-glyceraldehyde 3-phosphate and acetaldehyde from 2-deoxy-alpha-D-ribose 1-phosphate: step 1/2. In terms of biological role, isomerase that catalyzes the conversion of deoxy-ribose 1-phosphate (dRib-1-P) and ribose 1-phosphate (Rib-1-P) to deoxy-ribose 5-phosphate (dRib-5-P) and ribose 5-phosphate (Rib-5-P), respectively. The polypeptide is Phosphopentomutase (Shewanella denitrificans (strain OS217 / ATCC BAA-1090 / DSM 15013)).